The primary structure comprises 260 residues: UPF0246 protein Veis_4789 (260 aa).

The protein belongs to the UPF0246 family.

This chain is UPF0246 protein Veis_4789, found in Verminephrobacter eiseniae (strain EF01-2).